Here is a 239-residue protein sequence, read N- to C-terminus: IkB-like protein (239 aa).

ANK repeat units follow at residues 48-80 (SKIT…EIIS), 87-118 (DGNS…GIKV), 124-153 (NGIT…NPNQ), and 158-187 (KGFN…KPLF). The short motif at 81-87 (HYRRDKD) is the Nuclear localization signal element. Residues 203–214 (KKKPKIIITSCE) carry the Nuclear localization signal motif. The PxIxITxC motif; Interaction with host PPP3CA motif lies at 206 to 213 (PKIIITSC). An FLCV motif motif is present at residues 228-231 (FLCV).

The protein belongs to the asfivirus A238L family. As to quaternary structure, interacts with host PPIA. Interacts with host PPP3CA/Calcineurin. Interacts with host RELA/p65; interaction of the 32 kDa form with host RELA results in the formation of a stable complex with NF-kappa-B. Interacts with host PPP3R1. Interacts with host EP300; this interaction inhibits the association of host EP300 with host RELA, JUN and NFATC2. The protein exists in a 28 kDa and a 32 kDa form, probably due to post-translational modifications which are neither phosphorylation, nor sumoylation.

The protein localises to the host nucleus. The protein resides in the host cytoplasm. Functionally, ikB-like protein that inhibits the binding of NF-kappa-B to DNA, thereby downregulating pro-inflammatory cytokine production. Forms a heterodimer with the NF-kappa-B subunit RELA/p65 and prevents the activation of the NF-kappa-B transcription factor. Inhibits calcineurin function, which is required for the induction of nuclear factor of activated T cells (NFAT)-dependent immune response genes. Prevents the binding of substrates to calcineurin without affecting the phosphatase activity. Does not contain the serine residues that are phosphorylated by host IkB kinase and thus is not degraded following stimulation of the NFkB pathway. The polypeptide is IkB-like protein (A238L) (Ornithodoros (relapsing fever ticks)).